We begin with the raw amino-acid sequence, 583 residues long: MMRTNYCGDINKNYVNSVQVLCGWVNSYRDHGGVLFLDLRDRTGKVQVVVEPTNKDFELASTARTEYVLKVTGLVRLRQTEHINPNNPTGEIEVVAQEVEILNTSIQLPFEPDNSRQINEETRLKYRYIDLRNPVMLHNLTTRHKVAQAARRYFSDNGFIEIETPILTRSTPEGARDYLVPSRVHEGKFYALPQSPQMFKQTLMASGVDRYFQIARAFRDEDLRSDRQPEHTQIDIEMSFVTLADVFAAGEGMIAEVFKAAGEDAPAAPFEQMEYADVMAKYGSDKPDIRYEIDITDIGGIFTNSNFKVVSDALANGGVVRAIKAKYGAKHINRSTCDKLTDLAKASGAKGLVWLKYSDDKFEGPSAKFFTEEELASLQHTLSVEKDDMVFIGADKEKVVSPVMGAIRKELIKLLCLKPNKKWAFLWVKHFPLLEFVPEENRWDAAHNPFTAPLEKDIPLLDTDPGKVKSYQFDLVLNGVELASGSIRNHRRDLQEKILNLMKHSPEQAALRFGMLLNALEAGAPPHGGFGMGLDRLAALLCKEESIREVIAFPKTATAYCPLTESPNVVEDIQLKELHIKIK.

Residue E173 coordinates L-aspartate. Positions 197 to 200 (QMFK) are aspartate. L-aspartate is bound at residue R219. ATP contacts are provided by residues 219-221 (RDE) and Q228. H447 provides a ligand contact to L-aspartate. ATP is bound at residue E481. R488 is an L-aspartate binding site. 533–536 (GLDR) serves as a coordination point for ATP.

Belongs to the class-II aminoacyl-tRNA synthetase family. Type 1 subfamily. As to quaternary structure, homodimer.

Its subcellular location is the cytoplasm. It carries out the reaction tRNA(Asx) + L-aspartate + ATP = L-aspartyl-tRNA(Asx) + AMP + diphosphate. Functionally, aspartyl-tRNA synthetase with relaxed tRNA specificity since it is able to aspartylate not only its cognate tRNA(Asp) but also tRNA(Asn). Reaction proceeds in two steps: L-aspartate is first activated by ATP to form Asp-AMP and then transferred to the acceptor end of tRNA(Asp/Asn). The sequence is that of Aspartate--tRNA(Asp/Asn) ligase from Elusimicrobium minutum (strain Pei191).